A 494-amino-acid chain; its full sequence is DnaJ-related protein rsp1 (494 aa).

Residues 12-78 form the J domain; it reads DYYTILGAES…KLRELFDQRR (67 aa). The segment covering 229–242 has biased composition (polar residues); that stretch reads SEISNGLNSNGVEN. Positions 229–354 are disordered; it reads SEISNGLNSN…NDSTSNSTEY (126 aa). A compositionally biased stretch (low complexity) spans 243 to 256; the sequence is SSITKSSPRSSSSS. Over residues 270–287 the composition is skewed to polar residues; that stretch reads IFTSPNTPEHPSVYQTDI. Positions 321–331 are enriched in low complexity; it reads LSRSKSSSLSR. The segment covering 332–354 has biased composition (polar residues); it reads NQTRSQLNDLSAENDSTSNSTEY.

Interacts iwth ssa1.

The protein resides in the cytoplasm. Its subcellular location is the cytoskeleton. It localises to the nucleus. Its function is as follows. Has a role in the proper organization of the interphase microtubule cytoskeleton. Required for equatorial microtubule organizing center (eMTOC) disassembly into satellites, contributing to the dynamic redistribution of MTOC components for organization of interphase microtubules. This Schizosaccharomyces pombe (strain 972 / ATCC 24843) (Fission yeast) protein is DnaJ-related protein rsp1 (rsp1).